Here is a 260-residue protein sequence, read N- to C-terminus: Thiazole synthase (260 aa).

Lys96 serves as the catalytic Schiff-base intermediate with DXP. 1-deoxy-D-xylulose 5-phosphate contacts are provided by residues Gly157, 184 to 185 (AG), and 206 to 207 (NT).

This sequence belongs to the ThiG family. As to quaternary structure, homotetramer. Forms heterodimers with either ThiH or ThiS.

Its subcellular location is the cytoplasm. It catalyses the reaction [ThiS sulfur-carrier protein]-C-terminal-Gly-aminoethanethioate + 2-iminoacetate + 1-deoxy-D-xylulose 5-phosphate = [ThiS sulfur-carrier protein]-C-terminal Gly-Gly + 2-[(2R,5Z)-2-carboxy-4-methylthiazol-5(2H)-ylidene]ethyl phosphate + 2 H2O + H(+). It participates in cofactor biosynthesis; thiamine diphosphate biosynthesis. Functionally, catalyzes the rearrangement of 1-deoxy-D-xylulose 5-phosphate (DXP) to produce the thiazole phosphate moiety of thiamine. Sulfur is provided by the thiocarboxylate moiety of the carrier protein ThiS. In vitro, sulfur can be provided by H(2)S. In Rhodopseudomonas palustris (strain BisA53), this protein is Thiazole synthase.